A 449-amino-acid polypeptide reads, in one-letter code: POU domain, class 3, transcription factor 1 (449 aa).

Disordered regions lie at residues 1–22 (MATT…TGPL), 76–108 (GGGG…GGGG), 132–152 (AHHL…HQPQ), 184–251 (GLHH…PSSD), and 393–449 (KRMT…GSVQ). Composition is skewed to gly residues over residues 11-20 (GPGGGAGGTG) and 93-108 (AGGG…GGGG). The segment covering 132-143 (AHHLGPAMSPSP) has biased composition (low complexity). The segment covering 188-197 (ALHEDGHEAQ) has biased composition (basic and acidic residues). The span at 218–230 (AGGLHAAAAHLHP) shows a compositional bias: low complexity. The POU-specific domain maps to 245-319 (EDAPSSDDLE…LLNKWLEETD (75 aa)). The segment at residues 337–396 (KRKKRTSIEVGVKGALESHFLKCPKPSAHEITGLADSLQLEKEVVRVWFCNRRQKEKRMT) is a DNA-binding region (homeobox). Positions 425-434 (PSAPPPPPPA) are enriched in pro residues.

The protein belongs to the POU transcription factor family. Class-3 subfamily.

The protein resides in the nucleus. Functionally, transcription factor that binds to the octamer motif (5'-ATTTGCAT-3'). Acts as a transcriptional activator when binding cooperatively with SOX4, SOX11, or SOX12 to gene promoters. Acts as a transcriptional repressor of myelin-specific genes. In Mus musculus (Mouse), this protein is POU domain, class 3, transcription factor 1 (Pou3f1).